The sequence spans 243 residues: CRISPR-associated endoribonuclease Cas6 (243 aa).

Belongs to the CRISPR-associated endoribonuclease Cas6 family. In terms of assembly, part of the Csm effector complex that includes at least Cas10(1), Csm2(3), Csm3(5), Csm4(1); the presence of Csm5 and Cas6 may depend on the processing state of precursor crRNA. Csm with a precursor crRNA does not include Csm5, while Cas6, the enzyme probably involved in pre-crRNA processing, is found associated with a subset of the Csm complex that is probably in the process of pre-crRNA maturation. The Csm complex is elongated and slightly twisted with a maximal length of 215 Angstroms and a diameter of 75-80 Angstroms. It has been modeled to have a central protein filamant of Csm3 subunits along which the dsRNA helix of paired crRNA and target RNA binds. The filament is capped at one end by Cas10 and Csm4 and at the other end by Csm5; ssDNA is thought to bind to the N-terminal HD domain of Cas10.

CRISPR (clustered regularly interspaced short palindromic repeat) is an adaptive immune system that provides protection against mobile genetic elements (viruses, transposable elements and conjugative plasmids). CRISPR clusters contain spacers, sequences complementary to antecedent mobile elements, and target invading nucleic acids. CRISPR clusters are transcribed and processed into CRISPR RNA (crRNA). The type III-A Csm effector complex binds crRNA and acts as a crRNA-guided RNase, DNase and cyclic oligoadenylate synthase; binding of target RNA cognate to the crRNA is required for all activities. In a heterologous host this Csm effector complex restricts ssRNA phage MS2, suggesting it may target RNA viruses in vivo. Its function is as follows. Csm functions as a non-specific ssDNase. Base-pairing between crRNA and target RNA to form a ternary Csm complex activates a ssDNase activity; target RNA cleavage suppresses the ssDNase, a temporal control that prevents uncontrolled DNA degradation. Viral RNA transcripts probably tether the Csm complex to the viral genome, recruiting Cas10 ssDNA activity which is able to degrade DNA in the transcription bubble, spatially controlling the DNase activity. Functionally, this protein processes pre-crRNA into individual crRNA units. The sequence is that of CRISPR-associated endoribonuclease Cas6 from Streptococcus thermophilus.